The chain runs to 453 residues: MTTDTIVAQATAPGRGGVGIIRISGDKASDVAMAVLGHLPKTRYADYCDFKSASGQVIDQGIALFFKGPNSFTGEDVLELQGHGGQIVLDMLIKRVMEVGGIRIAKPGEFSEQAFMNDKLDLTQAEAIADLIDATSEQAAKSALQSLQGEFSKEVHELVDQVTNLRLYVEAAIDFPDEEVDFLSDGKIANALYKIIDKLDLVQASAKQGSIIREGMKVVIAGRPNAGKSSLLNALAGKESAIVTEIAGTTRDVLREHIHLDGMPLHIIDTAGLRDTNDTVEQIGIERAWNEINSADRVLFMVDGTTTAAVDPHTIWPDFVDRLPSNLGVTVIRNKADLTGEDLMMTEEQGYSVYRISAKTGLGVEELKQHLKSLMGYQSNLEGGFIARRRHLEALELAAGHLQLGKEQLEVYLAGELLAEELRMCQLALSEITGRFTSDDLLGKIFSSFCIGK.

(6S)-5-formyl-5,6,7,8-tetrahydrofolate is bound by residues arginine 22, glutamate 79, and lysine 119. Residues 215 to 376 (GMKVVIAGRP…LKQHLKSLMG (162 aa)) enclose the TrmE-type G domain. Asparagine 225 contacts K(+). GTP is bound by residues 225 to 230 (NAGKSS), 244 to 250 (TEIAGTT), 269 to 272 (DTAG), and 334 to 337 (NKAD). Position 229 (serine 229) interacts with Mg(2+). Threonine 244, isoleucine 246, and threonine 249 together coordinate K(+). Residue threonine 250 participates in Mg(2+) binding. Position 453 (lysine 453) interacts with (6S)-5-formyl-5,6,7,8-tetrahydrofolate.

The protein belongs to the TRAFAC class TrmE-Era-EngA-EngB-Septin-like GTPase superfamily. TrmE GTPase family. As to quaternary structure, homodimer. Heterotetramer of two MnmE and two MnmG subunits. Requires K(+) as cofactor.

It localises to the cytoplasm. Exhibits a very high intrinsic GTPase hydrolysis rate. Involved in the addition of a carboxymethylaminomethyl (cmnm) group at the wobble position (U34) of certain tRNAs, forming tRNA-cmnm(5)s(2)U34. This Shewanella baltica (strain OS195) protein is tRNA modification GTPase MnmE.